Reading from the N-terminus, the 480-residue chain is UDP-N-acetylmuramoyl-L-alanyl-D-glutamate--2,6-diaminopimelate ligase (480 aa).

A UDP-N-acetyl-alpha-D-muramoyl-L-alanyl-D-glutamate-binding site is contributed by S21. ATP is bound at residue 98–104 (GTNGKSS). Residues 144 to 145 (TT), S171, Q177, and R179 contribute to the UDP-N-acetyl-alpha-D-muramoyl-L-alanyl-D-glutamate site. At K211 the chain carries N6-carboxylysine. Meso-2,6-diaminopimelate is bound by residues R372, 396 to 399 (DNPR), G446, and E450. Positions 396 to 399 (DNPR) match the Meso-diaminopimelate recognition motif motif.

This sequence belongs to the MurCDEF family. MurE subfamily. Mg(2+) is required as a cofactor. Post-translationally, carboxylation is probably crucial for Mg(2+) binding and, consequently, for the gamma-phosphate positioning of ATP.

It is found in the cytoplasm. The catalysed reaction is UDP-N-acetyl-alpha-D-muramoyl-L-alanyl-D-glutamate + meso-2,6-diaminopimelate + ATP = UDP-N-acetyl-alpha-D-muramoyl-L-alanyl-gamma-D-glutamyl-meso-2,6-diaminopimelate + ADP + phosphate + H(+). The protein operates within cell wall biogenesis; peptidoglycan biosynthesis. Catalyzes the addition of meso-diaminopimelic acid to the nucleotide precursor UDP-N-acetylmuramoyl-L-alanyl-D-glutamate (UMAG) in the biosynthesis of bacterial cell-wall peptidoglycan. In Rickettsia prowazekii (strain Madrid E), this protein is UDP-N-acetylmuramoyl-L-alanyl-D-glutamate--2,6-diaminopimelate ligase.